The primary structure comprises 270 residues: MKKTKERETPEVPDELFAKCPACKHMIYQKDLGLEKICPKCFYNFRISAKERLAITVDGDSFQEMFTGIKSKDPLNFPAYQEKLAATQSKTGLDEAVVTGTAEFTGQKAALAIMDSNFIMASMGTVVGEKITRLFEYAREERLPVVIFTASGGARMQEGIMSLMQMAKISAAVKRHSNAGLFYLTVLTDPTTGGVTASFAMEGDIILAEPQTLIGFAGRRVIETTVRETLPEGFQKAEFLLEHGFVDAIVKRTELKKTIAKLLAFHGGSK.

The 255-residue stretch at leucine 16–lysine 270 folds into the CoA carboxyltransferase N-terminal domain. Residues cysteine 20, cysteine 23, cysteine 38, and cysteine 41 each coordinate Zn(2+). The segment at cysteine 20–cysteine 41 adopts a C4-type zinc-finger fold.

This sequence belongs to the AccD/PCCB family. In terms of assembly, acetyl-CoA carboxylase is a heterohexamer composed of biotin carboxyl carrier protein (AccB), biotin carboxylase (AccC) and two subunits each of ACCase subunit alpha (AccA) and ACCase subunit beta (AccD). The cofactor is Zn(2+).

The protein localises to the cytoplasm. The enzyme catalyses N(6)-carboxybiotinyl-L-lysyl-[protein] + acetyl-CoA = N(6)-biotinyl-L-lysyl-[protein] + malonyl-CoA. The protein operates within lipid metabolism; malonyl-CoA biosynthesis; malonyl-CoA from acetyl-CoA: step 1/1. Its function is as follows. Component of the acetyl coenzyme A carboxylase (ACC) complex. Biotin carboxylase (BC) catalyzes the carboxylation of biotin on its carrier protein (BCCP) and then the CO(2) group is transferred by the transcarboxylase to acetyl-CoA to form malonyl-CoA. The sequence is that of Acetyl-coenzyme A carboxylase carboxyl transferase subunit beta from Streptococcus mutans serotype c (strain NN2025).